A 188-amino-acid polypeptide reads, in one-letter code: Large ribosomal subunit protein eL18 (188 aa).

Lys119 participates in a covalent cross-link: Glycyl lysine isopeptide (Lys-Gly) (interchain with G-Cter in SUMO2). Ser130 bears the Phosphoserine mark. Positions 151-188 are disordered; sequence HFGKAPGTPHSHTKPYVRSKGRKFERARGRRASRGYKN. Residue Thr158 is modified to Phosphothreonine. Basic residues-rich tracts occupy residues 161–171 and 178–188; these read SHTKPYVRSKG and RGRRASRGYKN. A Glycyl lysine isopeptide (Lys-Gly) (interchain with G-Cter in SUMO2) cross-link involves residue Lys164.

It belongs to the eukaryotic ribosomal protein eL18 family. Component of the large ribosomal subunit.

The protein localises to the cytoplasm. It is found in the cytosol. Its subcellular location is the rough endoplasmic reticulum. Functionally, component of the large ribosomal subunit. The ribosome is a large ribonucleoprotein complex responsible for the synthesis of proteins in the cell. This chain is Large ribosomal subunit protein eL18 (RPL18), found in Homo sapiens (Human).